Reading from the N-terminus, the 77-residue chain is Large ribosomal subunit protein bL28 (77 aa).

It belongs to the bacterial ribosomal protein bL28 family.

This Polaromonas sp. (strain JS666 / ATCC BAA-500) protein is Large ribosomal subunit protein bL28.